The sequence spans 1171 residues: ATP-dependent helicase/deoxyribonuclease subunit B (1171 aa).

Belongs to the helicase family. AddB/RexB type 2 subfamily. In terms of assembly, heterodimer of AddA and RexB. Mg(2+) is required as a cofactor.

The heterodimer acts as both an ATP-dependent DNA helicase and an ATP-dependent, dual-direction single-stranded exonuclease. Recognizes the chi site generating a DNA molecule suitable for the initiation of homologous recombination. This subunit has 5' -&gt; 3' nuclease activity but not helicase activity. The polypeptide is ATP-dependent helicase/deoxyribonuclease subunit B (Leuconostoc citreum (strain KM20)).